We begin with the raw amino-acid sequence, 264 residues long: tRNA pseudouridine synthase A (264 aa).

Asp-51 (nucleophile) is an active-site residue. Tyr-109 is a binding site for substrate.

It belongs to the tRNA pseudouridine synthase TruA family. In terms of assembly, homodimer.

The enzyme catalyses uridine(38/39/40) in tRNA = pseudouridine(38/39/40) in tRNA. Its function is as follows. Formation of pseudouridine at positions 38, 39 and 40 in the anticodon stem and loop of transfer RNAs. The sequence is that of tRNA pseudouridine synthase A from Pasteurella multocida (strain Pm70).